A 341-amino-acid chain; its full sequence is HTH-type transcriptional repressor PurR (341 aa).

An HTH lacI-type domain is found at 2 to 56 (ATIKDVAKRANVSTTTVSHVINKTRFVAEETRNAVWAAIKELHYSPSAVARSLKV). The H-T-H motif DNA-binding region spans 4–23 (IKDVAKRANVSTTTVSHVIN). A DNA-binding region spans residues 48–56 (SAVARSLKV). Tyr-73, Arg-190, Thr-192, Phe-221, and Asp-275 together coordinate hypoxanthine.

As to quaternary structure, homodimer.

It participates in purine metabolism; purine nucleotide biosynthesis [regulation]. Its function is as follows. Is the main repressor of the genes involved in the de novo synthesis of purine nucleotides, regulating purB, purC, purEK, purF, purHD, purL, purMN and guaBA expression. PurR is allosterically activated to bind its cognate DNA by binding the purine corepressors, hypoxanthine or guanine, thereby effecting transcription repression. The sequence is that of HTH-type transcriptional repressor PurR from Salmonella arizonae (strain ATCC BAA-731 / CDC346-86 / RSK2980).